The following is a 461-amino-acid chain: Ribulose bisphosphate carboxylase (461 aa).

Position 112 (Asn112) interacts with substrate. The active-site Proton acceptor is the Lys167. Position 169 (Lys169) interacts with substrate. Mg(2+) contacts are provided by Lys192, Asp194, and Glu195. Lys192 is modified (N6-carboxylysine). His288 acts as the Proton acceptor in catalysis. 3 residues coordinate substrate: Arg289, His322, and Ser369.

Belongs to the RuBisCO large chain family. Type II subfamily. Homodimer. Mg(2+) is required as a cofactor.

It catalyses the reaction 2 (2R)-3-phosphoglycerate + 2 H(+) = D-ribulose 1,5-bisphosphate + CO2 + H2O. The catalysed reaction is D-ribulose 1,5-bisphosphate + O2 = 2-phosphoglycolate + (2R)-3-phosphoglycerate + 2 H(+). RuBisCO catalyzes two reactions: the carboxylation of D-ribulose 1,5-bisphosphate, the primary event in carbon dioxide fixation, as well as the oxidative fragmentation of the pentose substrate. Both reactions occur simultaneously and in competition at the same active site. In Rhodopseudomonas palustris (strain ATCC BAA-98 / CGA009), this protein is Ribulose bisphosphate carboxylase.